We begin with the raw amino-acid sequence, 2876 residues long: Nipped-B-like protein B (2876 aa).

Composition is skewed to polar residues over residues P124 to T142 and Y149 to P167. 4 disordered regions span residues P124–Q197, N246–E367, R439–K494, and E525–Y1017. A compositionally biased stretch (pro residues) spans G276 to T290. A compositionally biased stretch (basic and acidic residues) spans R439 to K457. Positions P471–S480 are enriched in low complexity. Over residues G481 to N490 the composition is skewed to gly residues. Basic and acidic residues-rich tracts occupy residues S556–V577, V586–S955, and V962–Q1005. Residues N1068–S1081 carry the PxVxL motif motif. Disordered stretches follow at residues M1088–L1229 and T1724–E1747. The span at S1090–S1100 shows a compositional bias: low complexity. Composition is skewed to basic and acidic residues over residues R1104 to K1119 and K1156 to R1183. The segment covering K1212–K1223 has biased composition (basic residues). HEAT repeat units lie at residues A1803–S1841, P1879–T1917, Y1981–K2020, V2203–G2241, and L2349–G2387. Disordered regions lie at residues E2516 to L2590 and A2728 to N2774. The segment covering K2519 to K2537 has biased composition (basic residues). The span at R2548–S2563 shows a compositional bias: low complexity. The segment covering R2762–N2774 has biased composition (basic and acidic residues).

This sequence belongs to the SCC2/Nipped-B family.

It localises to the nucleus. Functionally, may play a structural role in chromatin. Involved in sister chromatid cohesion, possibly by facilitating the cohesin complex loading. Transcription factor, which may promote cortical neuron migration during brain development by regulating the transcription of crucial genes in this process. The sequence is that of Nipped-B-like protein B (nipblb) from Danio rerio (Zebrafish).